A 649-amino-acid polypeptide reads, in one-letter code: Glucan endo-1,3-beta-glucosidase btgC (649 aa).

Disordered stretches follow at residues 1 to 50 (MGDR…AHTH) and 110 to 224 (YHTT…AGGA). Residues 1–274 (MGDRSEQYGD…PRPSGASRKR (274 aa)) lie on the Cytoplasmic side of the membrane. Residues 144-157 (GSSAALSAAGAPAG) show a composition bias toward low complexity. Residues 198–208 (NPDDILDDGDD) are compositionally biased toward acidic residues. A helical; Signal-anchor for type II membrane protein membrane pass occupies residues 275–295 (GWIIGGILAFIVIGAIVGGAV). Residues 296–649 (GGTLGNRRSE…IPDCGGKTAA (354 aa)) are Extracellular-facing. The interval 301–329 (NRRSETASESSEVSADDDTETNGDLDKNS) is disordered. The span at 314–323 (SADDDTETNG) shows a compositional bias: acidic residues. N369, N392, and N420 each carry an N-linked (GlcNAc...) asparagine glycan. Residue E452 is the Proton donor of the active site. E551 serves as the catalytic Nucleophile. N-linked (GlcNAc...) asparagine glycosylation is present at N596.

This sequence belongs to the glycosyl hydrolase 17 family.

The protein localises to the cell membrane. The enzyme catalyses Hydrolysis of (1-&gt;3)-beta-D-glucosidic linkages in (1-&gt;3)-beta-D-glucans.. Its function is as follows. Glucanases play a role in cell expansion during growth, in cell-cell fusion during mating, and in spore release during sporulation. This enzyme may be involved in beta-glucan degradation. Active on laminarin and lichenan. This is Glucan endo-1,3-beta-glucosidase btgC (btgC) from Emericella nidulans (strain FGSC A4 / ATCC 38163 / CBS 112.46 / NRRL 194 / M139) (Aspergillus nidulans).